We begin with the raw amino-acid sequence, 678 residues long: Ribosome biogenesis protein BOP1 homolog (678 aa).

A compositionally biased stretch (basic and acidic residues) spans 1–10 (MGHSDGDHGS). Residues 1 to 73 (MGHSDGDHGS…VAPRNTIGDV (73 aa)) are disordered. Residues 24 to 63 (WSDDDDEGSLSFEDSGEGSDAESDEPDAPAVEESDSSEDE) are compositionally biased toward acidic residues. WD repeat units follow at residues 343 to 384 (GHNG…KVWN), 386 to 424 (GGVV…EDAQ), 463 to 505 (IHHK…SHHP), 508 to 548 (KLPG…KKLE), 549 to 588 (SGVR…RPYK), 592 to 631 (NHSK…DLNQ), and 647 to 678 (SDGR…LYCD).

The protein belongs to the WD repeat BOP1/ERB1 family.

It is found in the nucleus. It localises to the nucleolus. The protein resides in the nucleoplasm. Functionally, required for maturation of ribosomal RNAs and formation of the large ribosomal subunit. The polypeptide is Ribosome biogenesis protein BOP1 homolog (Oryza sativa subsp. japonica (Rice)).